The sequence spans 686 residues: Translation initiation factor IF-2 (686 aa).

Positions 61 to 98 (FEVEEKVVRSKKNSNKKKKKGKGNEDKRQENFAGRQQT) are disordered. Basic residues predominate over residues 69-81 (RSKKNSNKKKKKG). The region spanning 188-357 (ERPAVVTIMG…LLVSEVEEYK (170 aa)) is the tr-type G domain. Residues 197–204 (GHVDHGKT) form a G1 region. 197–204 (GHVDHGKT) is a GTP binding site. Positions 222 to 226 (GITQH) are G2. Residues 243-246 (DTPG) form a G3 region. GTP-binding positions include 243-247 (DTPGH) and 297-300 (NKMD). Positions 297-300 (NKMD) are G4. A G5 region spans residues 333 to 335 (SAI).

This sequence belongs to the TRAFAC class translation factor GTPase superfamily. Classic translation factor GTPase family. IF-2 subfamily.

The protein localises to the cytoplasm. One of the essential components for the initiation of protein synthesis. Protects formylmethionyl-tRNA from spontaneous hydrolysis and promotes its binding to the 30S ribosomal subunits. Also involved in the hydrolysis of GTP during the formation of the 70S ribosomal complex. The sequence is that of Translation initiation factor IF-2 from Bacillus cereus (strain B4264).